The primary structure comprises 353 residues: 4-hydroxy-2-oxovalerate aldolase 1 (353 aa).

A Pyruvate carboxyltransferase domain is found at 14–266 (VRMTDTSLRD…KTGIDFFDIA (253 aa)). Position 22–23 (22–23 (RD)) interacts with substrate. A Mn(2+)-binding site is contributed by Asp-23. Residue His-26 is the Proton acceptor of the active site. Residues Ser-176 and His-205 each coordinate substrate. Mn(2+) contacts are provided by His-205 and His-207. Tyr-296 serves as a coordination point for substrate.

The protein belongs to the 4-hydroxy-2-oxovalerate aldolase family.

It carries out the reaction (S)-4-hydroxy-2-oxopentanoate = acetaldehyde + pyruvate. The sequence is that of 4-hydroxy-2-oxovalerate aldolase 1 from Mycobacterium sp. (strain KMS).